Consider the following 342-residue polypeptide: Voltage-gated hydrogen channel 1 (342 aa).

Disordered stretches follow at residues 1 to 20 (MEGD…INPN) and 74 to 102 (FNDN…SEQK). The Cytoplasmic portion of the chain corresponds to 1-148 (MEGDNCNKSR…KLRHILHSKP (148 aa)). Residues 86–102 (QEQSTQNTMISMQSEQK) are compositionally biased toward polar residues. The helical transmembrane segment at 149–169 (IHVAIIVLVVLDSFLVVGELL) threads the bilayer. Residues 170–185 (IDLKVIIVPHGNPAPE) lie on the Extracellular side of the membrane. Residues 186–208 (ILHGFSLSILSIFMVEIALKIIA) traverse the membrane as a helical segment. Residues 209–217 (DHRHFIHHK) are Cytoplasmic-facing. Residues 218-238 (VEVLDAVVVVISFGVDIALIF) form a helical membrane-spanning segment. At 239–247 (VGESEALAA) the chain is on the extracellular side. Residues 248–268 (IGLLVILRLWRVFRIINGIIV) form a helical membrane-spanning segment. Topologically, residues 269–342 (TVKTKADDRV…HSTTTASADV (74 aa)) are cytoplasmic. A coiled-coil region spans residues 271–315 (KTKADDRVHEIKKKNSELELQIHNLEEKLSQKEQDMSRLHEILRC).

This sequence belongs to the hydrogen channel family. As to quaternary structure, homodimer.

The protein resides in the membrane. It localises to the cell membrane. Less sensitive to zinc ions as compared to the mammalian homologs. In terms of biological role, mediates the voltage-dependent proton permeability of excitable membranes. Forms a proton-selective channel through which protons may pass in accordance with their electrochemical gradient. The sequence is that of Voltage-gated hydrogen channel 1 (HVCN1) from Ciona intestinalis (Transparent sea squirt).